A 166-amino-acid chain; its full sequence is MTFIDPSKLDLDDNVVAINRITKVVKGGRRLRFAALVIVGDHKGHVGFGTGKAQEVPEAIRKASEAAKKNLITVPMVGTTIPHEALGVYGGGRIMLKPAVEGSGVAAGGAVRAVMELAGVDDVTSKRLGSNTPVNVVRATFEGLKSLKTAEQVAALRGVSAEHLAE.

Residues 11 to 74 (LDDNVVAINR…EAAKKNLITV (64 aa)) form the S5 DRBM domain.

The protein belongs to the universal ribosomal protein uS5 family. Part of the 30S ribosomal subunit. Contacts proteins S4 and S8.

Its function is as follows. With S4 and S12 plays an important role in translational accuracy. Located at the back of the 30S subunit body where it stabilizes the conformation of the head with respect to the body. The polypeptide is Small ribosomal subunit protein uS5 (Lactiplantibacillus plantarum (strain ATCC BAA-793 / NCIMB 8826 / WCFS1) (Lactobacillus plantarum)).